We begin with the raw amino-acid sequence, 335 residues long: 34 kDa spicule matrix protein (335 aa).

Residues 1–17 form the signal peptide; that stretch reads MKGLLLILASLVAIATG. Positions 29 to 194 constitute a C-type lectin domain; it reads SGASCYRYFN…ATAMRAFVCE (166 aa). Residues cysteine 50 and cysteine 193 are joined by a disulfide bond. Positions 199–335 are disordered; the sequence is QNIPPGQQPG…QEAETDVTGS (137 aa). The span at 207 to 310 shows a compositional bias: gly residues; that stretch reads PGFGGQQPGF…GGPQRPGMGG (104 aa). The segment covering 311 to 323 has biased composition (low complexity); the sequence is QPNSPNPRFNRPR.

Belongs to the SM50 family. Embryo spicule.

The protein localises to the secreted. In terms of biological role, major matrix protein of the sea urchin embryo spicule which directs crystal growth in certain orientations and inhibit growth in others. This chain is 34 kDa spicule matrix protein, found in Lytechinus pictus (Painted sea urchin).